Consider the following 43-residue polypeptide: Putative inhibitor of glucose uptake transporter SgrT (43 aa).

Functionally, acts to promote recovery from glucose-phosphate stress due to intracellular accumulation of glucose-6-phosphate caused by disruption of glycolytic flux or in the presence of (toxic) non-metabolizable glucose phosphate analogs. It may do so by inhibiting the transporter activity for glucose uptake (PtsG) as cells that overexpress this protein do not seem to import glucose although they have nearly wild-type levels of PtsG. The chain is Putative inhibitor of glucose uptake transporter SgrT (sgrT) from Escherichia coli (strain K12).